We begin with the raw amino-acid sequence, 889 residues long: Terminal uridylyltransferase 3 (889 aa).

The C2H2-type; atypical zinc-finger motif lies at 123–151; it reads VRCDLCAKMIESRDEEQIQEHFQVHHAAL. The Zn(2+) site is built by cysteine 125, cysteine 128, histidine 143, and histidine 148. Residues serine 225 and 236–239 contribute to the UTP site; that span reads SDAD. Residues aspartate 237 and aspartate 239 each coordinate Mg(2+). Arginine 286 serves as a coordination point for RNA. UTP-binding positions include 394-398, lysine 419, lysine 423, and 437-438; these read GVRNS and SY. The PAP-associated domain maps to 505–572; sequence LGGLIPLFFL…LCIDDPYEDN (68 aa). A Nucleotide recognition motif (NRM) motif is present at residues 565–574; it reads IDDPYEDNFN. 2 disordered regions span residues 675 to 702 and 829 to 849; these read NNKS…HVES and RKKS…NHAG. A compositionally biased stretch (basic residues) spans 829-846; sequence RKKSKGSKKRKNAVRRGN.

The protein belongs to the DNA polymerase type-B-like family. Requires Mg(2+) as cofactor. The cofactor is Mn(2+).

Its subcellular location is the cytoplasm. It catalyses the reaction RNA(n) + UTP = RNA(n)-3'-uridine ribonucleotide + diphosphate. Its function is as follows. Terminal uridylyltransferase which catalyzes the addition of Us to the 3'-hydroxyl group of single-stranded RNAs. Does not mediate RNA-independent UTP polymerization. This chain is Terminal uridylyltransferase 3, found in Trypanosoma brucei brucei.